Here is a 334-residue protein sequence, read N- to C-terminus: Phosphate acyltransferase (334 aa).

The protein belongs to the PlsX family. As to quaternary structure, homodimer. Probably interacts with PlsY.

Its subcellular location is the cytoplasm. The catalysed reaction is a fatty acyl-[ACP] + phosphate = an acyl phosphate + holo-[ACP]. It functions in the pathway lipid metabolism; phospholipid metabolism. Catalyzes the reversible formation of acyl-phosphate (acyl-PO(4)) from acyl-[acyl-carrier-protein] (acyl-ACP). This enzyme utilizes acyl-ACP as fatty acyl donor, but not acyl-CoA. The protein is Phosphate acyltransferase of Halothermothrix orenii (strain H 168 / OCM 544 / DSM 9562).